A 608-amino-acid chain; its full sequence is Serine/threonine-protein kinase SSN3 (608 aa).

The interval Met-1 to Ile-72 is disordered. The segment covering Ser-17–Gln-47 has biased composition (low complexity). Positions Leu-49–His-59 are enriched in basic residues. One can recognise a Protein kinase domain in the interval Tyr-104–Phe-492. Residues Ile-110–Val-118 and Lys-182 each bind ATP. The active-site Proton acceptor is Asp-307. Positions Met-523 to Gly-608 are disordered. Over residues Asn-528–Gln-583 the composition is skewed to low complexity.

The protein belongs to the protein kinase superfamily. CMGC Ser/Thr protein kinase family. CDC2/CDKX subfamily. Component of the SRB8-11 complex, a regulatory module of the Mediator complex. Mg(2+) serves as cofactor.

The protein localises to the nucleus. It carries out the reaction L-seryl-[protein] + ATP = O-phospho-L-seryl-[protein] + ADP + H(+). It catalyses the reaction L-threonyl-[protein] + ATP = O-phospho-L-threonyl-[protein] + ADP + H(+). The enzyme catalyses [DNA-directed RNA polymerase] + ATP = phospho-[DNA-directed RNA polymerase] + ADP + H(+). Its function is as follows. Component of the SRB8-11 complex. The SRB8-11 complex is a regulatory module of the Mediator complex which is itself involved in regulation of basal and activated RNA polymerase II-dependent transcription. The SRB8-11 complex may be involved in the transcriptional repression of a subset of genes regulated by Mediator. It may inhibit the association of the Mediator complex with RNA polymerase II to form the holoenzyme complex. The SRB8-11 complex phosphorylates the C-terminal domain (CTD) of the largest subunit of RNA polymerase II. In Candida albicans (strain SC5314 / ATCC MYA-2876) (Yeast), this protein is Serine/threonine-protein kinase SSN3 (SSN3).